Consider the following 903-residue polypeptide: Valine--tRNA ligase (903 aa).

Residues 1-15 (MVCVTDQNNENPSQN) are compositionally biased toward polar residues. Residues 1–22 (MVCVTDQNNENPSQNRADKLPK) are disordered. The 'HIGH' region motif lies at 61-71 (PNVTGQLHMGH). The short motif at 552 to 556 (KMSKS) is the 'KMSKS' region element. Lys555 lines the ATP pocket. Residues 836 to 902 (TVDVAAERKR…ERITKRLEEL (67 aa)) adopt a coiled-coil conformation.

The protein belongs to the class-I aminoacyl-tRNA synthetase family. ValS type 1 subfamily. In terms of assembly, monomer.

It localises to the cytoplasm. The enzyme catalyses tRNA(Val) + L-valine + ATP = L-valyl-tRNA(Val) + AMP + diphosphate. Functionally, catalyzes the attachment of valine to tRNA(Val). As ValRS can inadvertently accommodate and process structurally similar amino acids such as threonine, to avoid such errors, it has a 'posttransfer' editing activity that hydrolyzes mischarged Thr-tRNA(Val) in a tRNA-dependent manner. This chain is Valine--tRNA ligase, found in Corynebacterium efficiens (strain DSM 44549 / YS-314 / AJ 12310 / JCM 11189 / NBRC 100395).